The chain runs to 295 residues: Caffeine dehydrogenase subunit beta (295 aa).

Residues methionine 1–glutamine 178 form the FAD-binding PCMH-type domain. FAD contacts are provided by residues alanine 32–serine 36 and threonine 111–asparagine 115.

As to quaternary structure, heterotrimer composed of an alpha (CdhA), a beta (CdhB) and a gamma (CdhC) subunit.

The enzyme catalyses caffeine + a ubiquinone + H2O = 1,3,7-trimethylurate + a ubiquinol. The catalysed reaction is ubiquinone-0 + caffeine + H2O = ubiquinol-0 + 1,3,7-trimethylurate. It catalyses the reaction theobromine + a ubiquinone + H2O = 3,7-dimethylurate + a ubiquinol. In terms of biological role, component of the caffeine dehydrogenase complex that catalyzes the hydrolytical oxidation of 1,3,7-trimethylxanthine (caffeine) by incorporation of an oxygen atom originating from a water molecule into position C-8 to produce 1,3,7-trimethyluric acid (TMU). Coenzyme Q0 (ubiquinone-0) is the preferred electron acceptor and, to a lesser extent, coenzyme Q2 (ubiquinone-2) can also be used, but oxygen and NAD(P)(+) cannot. Is involved in a caffeine degradation pathway that allows Pseudomonas sp. strain CBB1 to grow on caffeine as the sole carbon and nitrogen source. Is also active with theobromine as substrate, but shows a very poor activity with theophylline and is not active with xanthine, 3-methylxanthine, 7-methylxanthine, TMU, and 3,7-dimethylurate. The polypeptide is Caffeine dehydrogenase subunit beta (Pseudomonas sp. (strain CBB1)).